The following is a 140-amino-acid chain: Low calcium response locus protein T (140 aa).

This chain is Low calcium response locus protein T (lcrT), found in Yersinia pseudotuberculosis serotype I (strain IP32953).